The chain runs to 589 residues: Glucose starvation modulator protein 1 (589 aa).

A DNA-binding region (zn(2)-C6 fungal-type) is located at residues 20 to 48 (CVFCHQKHLQCSNERPCKNCVKRNIGHEC). Disordered regions lie at residues 59-90 (LTGN…PSVA), 218-240 (NNSN…NPEP), and 340-362 (ANGQ…PGNG). Over residues 80 to 90 (TPITASSPSVA) the composition is skewed to polar residues. Over residues 347–357 (LLDHNKDDSRK) the composition is skewed to basic and acidic residues. The PAS domain maps to 471-542 (SLLDYKKLVE…FKFFKNIAVN (72 aa)).

The protein belongs to the ERT1/acuK family.

Its subcellular location is the nucleus. Its function is as follows. Transcription factor which regulates nonfermentable carbon utilization. The protein is Glucose starvation modulator protein 1 (GSM1) of Candida tropicalis (strain ATCC MYA-3404 / T1) (Yeast).